A 463-amino-acid polypeptide reads, in one-letter code: Sodium-coupled neutral amino acid transporter 7 (463 aa).

Residue serine 28 is modified to Phosphoserine. Helical transmembrane passes span 56–76, 82–102, 130–150, 179–199, 206–226, 240–260, 283–303, 320–340, 372–392, 396–416, and 429–449; these read AIFI…PAAF, VAAG…GLVI, LCEV…LIII, FTIS…REIG, FLSV…YIWP, ASWI…QCHV, AAMV…FLTF, MAVA…YPIL, VLQT…IPDI, ISVI…LCLI, and ASWW…AFIF.

The protein belongs to the amino acid/polyamine transporter 2 family. As to quaternary structure, interacts with the mTORC1 complex; this interaction mediates the recruitment of mTORC1 to the lysosome and its subsequent activation.

It localises to the lysosome membrane. The protein resides in the cell projection. It is found in the axon. The enzyme catalyses L-asparagine(in) + Na(+)(in) = L-asparagine(out) + Na(+)(out). The catalysed reaction is L-glutamine(in) + Na(+)(in) = L-glutamine(out) + Na(+)(out). Functionally, symporter that selectively cotransports sodium ions and amino acids, such as L-glutamine and L-asparagine from the lysosome into the cytoplasm and may participates in mTORC1 activation. The transport activity requires an acidic lysosomal lumen. This chain is Sodium-coupled neutral amino acid transporter 7, found in Bos taurus (Bovine).